Consider the following 719-residue polypeptide: Serine/threonine-protein kinase PAK 5 (719 aa).

5 disordered regions span residues 1–28 (MFGK…FDPQ), 96–118 (RSNS…RIQG), 226–245 (SPLD…TSRC), 253–298 (SESD…PMMP), and 339–372 (VFSP…GSHQ). The CRIB domain maps to 11-24 (ISGPSNFEHRVHTG). Residues 25–448 (FDPQEQKFTG…VVSPGDPREY (424 aa)) are linker. Serine 104 carries the phosphoserine modification. Threonine 107 is subject to Phosphothreonine. The segment covering 226–244 (SPLDYSFQLTPSRTAGTSR) has biased composition (polar residues). A compositionally biased stretch (polar residues) spans 357–372 (LPQSQSKAGYSSGSHQ). Residues 449–700 (LDNFIKIGEG…AQELLGHPFL (252 aa)) form the Protein kinase domain. Residues 455–463 (IGEGSTGIV) and lysine 478 contribute to the ATP site. Catalysis depends on aspartate 568, which acts as the Proton acceptor.

Belongs to the protein kinase superfamily. STE Ser/Thr protein kinase family. STE20 subfamily. Interacts tightly with GTP-bound but not GDP-bound CDC42/p21 and RAC1. Interacts with MARK2, leading to inhibit MARK2 independently of kinase activity. Interacts with RHOD and RHOH. Autophosphorylated when activated by CDC42/p21. In terms of tissue distribution, highly expressed in brain and eye. Also expressed in adrenal gland, pancreas, prostate and testes. Within the brain, expression is restricted to neurons. Present in brain but not in kidney, lung and spleen (at protein level).

Its subcellular location is the mitochondrion. The protein localises to the cytoplasm. It is found in the nucleus. It catalyses the reaction L-seryl-[protein] + ATP = O-phospho-L-seryl-[protein] + ADP + H(+). The enzyme catalyses L-threonyl-[protein] + ATP = O-phospho-L-threonyl-[protein] + ADP + H(+). Serine/threonine protein kinase that plays a role in a variety of different signaling pathways including cytoskeleton regulation, cell migration, proliferation or cell survival. Activation by various effectors including growth factor receptors or active CDC42 and RAC1 results in a conformational change and a subsequent autophosphorylation on several serine and/or threonine residues. Phosphorylates the proto-oncogene RAF1 and stimulates its kinase activity. Promotes cell survival by phosphorylating the BCL2 antagonist of cell death BAD. Phosphorylates CTNND1, probably to regulate cytoskeletal organization and cell morphology. Keeps microtubules stable through MARK2 inhibition and destabilizes the F-actin network leading to the disappearance of stress fibers and focal adhesions. This chain is Serine/threonine-protein kinase PAK 5, found in Mus musculus (Mouse).